The following is a 98-amino-acid chain: NADH-ubiquinone oxidoreductase chain 4L (98 aa).

3 consecutive transmembrane segments (helical) span residues 2 to 22 (TSAF…TFMF), 26 to 46 (LMST…MTST), and 59 to 79 (IPIT…ALLV).

This sequence belongs to the complex I subunit 4L family. As to quaternary structure, core subunit of respiratory chain NADH dehydrogenase (Complex I) which is composed of 45 different subunits.

It localises to the mitochondrion inner membrane. The catalysed reaction is a ubiquinone + NADH + 5 H(+)(in) = a ubiquinol + NAD(+) + 4 H(+)(out). Core subunit of the mitochondrial membrane respiratory chain NADH dehydrogenase (Complex I) which catalyzes electron transfer from NADH through the respiratory chain, using ubiquinone as an electron acceptor. Part of the enzyme membrane arm which is embedded in the lipid bilayer and involved in proton translocation. The sequence is that of NADH-ubiquinone oxidoreductase chain 4L from Rattus norvegicus (Rat).